Reading from the N-terminus, the 144-residue chain is Histone H2B.2, sperm (144 aa).

The disordered stretch occupies residues 1 to 51 (MPRSPSKTSPRKGSPRRGSPSRKASPKRGGKGAKRAGKGGRRRNVVRRRRR). Short sequence motifs (SPKK motif) lie at residues 4–7 (SPSK), 9–12 (SPRK), 14–17 (SPRR), 19–22 (SPSR), and 25–28 (SPKR). 3 positions are modified to phosphoserine: S14, S19, and S25. Over residues 24–51 (ASPKRGGKGAKRAGKGGRRRNVVRRRRR) the composition is skewed to basic residues. The O-linked (GlcNAc) serine glycan is linked to S131. K139 participates in a covalent cross-link: Glycyl lysine isopeptide (Lys-Gly) (interchain with G-Cter in ubiquitin).

This sequence belongs to the histone H2B family. As to quaternary structure, the nucleosome is a histone octamer containing two molecules each of H2A, H2B, H3 and H4 assembled in one H3-H4 heterotetramer and two H2A-H2B heterodimers. The octamer wraps approximately 147 bp of DNA. Monoubiquitination of Lys-139 gives a specific tag for epigenetic transcriptional activation and is also prerequisite for histone H3 'Lys-4' and 'Lys-79' methylation. Post-translationally, phosphorylated on SPKK motifs 3, 4 and 5; which may regulate DNA binding. Dephosphorylated during maturation of spermatids to mature sperm and rephosphorylated at fertilization. In terms of processing, glcNAcylation at Ser-131 promotes monoubiquitination of Lys-139. It fluctuates in response to extracellular glucose, and associates with transcribed genes.

The protein resides in the nucleus. It is found in the chromosome. Its function is as follows. Core component of nucleosome. Nucleosomes wrap and compact DNA into chromatin, limiting DNA accessibility to the cellular machineries which require DNA as a template. Histones thereby play a central role in transcription regulation, DNA repair, DNA replication and chromosomal stability. DNA accessibility is regulated via a complex set of post-translational modifications of histones, also called histone code, and nucleosome remodeling. The sequence is that of Histone H2B.2, sperm from Strongylocentrotus purpuratus (Purple sea urchin).